Reading from the N-terminus, the 185-residue chain is Ribosome-recycling factor (185 aa).

It belongs to the RRF family.

The protein localises to the cytoplasm. In terms of biological role, responsible for the release of ribosomes from messenger RNA at the termination of protein biosynthesis. May increase the efficiency of translation by recycling ribosomes from one round of translation to another. The chain is Ribosome-recycling factor from Campylobacter jejuni subsp. jejuni serotype O:23/36 (strain 81-176).